A 299-amino-acid polypeptide reads, in one-letter code: CRISPR system Cms protein Csm4 (299 aa).

Belongs to the CRISPR-associated Csm4 family. In terms of assembly, part of the Csm effector complex that includes at least Cas10(1), Csm2(3), Csm3(5), Csm4(1), Csm5(1) and mature crRNA. The Csm complex is elongated and slightly twisted with a maximal length of 215 Angstroms and a diameter of 75-80 Angstroms. It has been modeled to have a central protein filamant of Csm3 subunits along which the dsRNA helix of paired crRNA and target RNA binds. The filament is capped at one end by Cas10 and Csm4 and at the other end by Csm5; ssDNA is thought to bind to the N-terminal HD domain of Cas10. Csm with a precursor crRNA does not include Csm5, while Cas6, the enzyme probably involved in pre-crRNA processing, is found associated with a subset of the Csm complex.

Its function is as follows. CRISPR (clustered regularly interspaced short palindromic repeat) is an adaptive immune system that provides protection against mobile genetic elements (viruses, transposable elements and conjugative plasmids). CRISPR clusters contain spacers, sequences complementary to antecedent mobile elements, and target invading nucleic acids. CRISPR clusters are transcribed and processed into CRISPR RNA (crRNA). The type III-A Csm effector complex binds crRNA and acts as a crRNA-guided RNase, DNase and cyclic oligoadenylate synthase; binding of target RNA cognate to the crRNA is required for all activities. In a heterologous host this Csm effector complex restricts ssRNA phage MS2, suggesting it may target RNA viruses in vivo. In terms of biological role, csm functions as a non-specific ssDNase. Base-pairing between crRNA and target RNA to form a ternary Csm complex activates a ssDNase activity; target RNA cleavage suppresses the ssDNase, a temporal control that prevents uncontrolled DNA degradation. Viral RNA transcripts probably tether the Csm complex to the viral genome, recruiting Cas10 ssDNA activity which is able to degrade DNA in the transcription bubble, spatially controlling the DNase activity. The subunit probably binds to the 5' handle of the crRNA, helping in discrimination between self- and non-self. This is CRISPR system Cms protein Csm4 from Streptococcus thermophilus.